Consider the following 294-residue polypeptide: NAD kinase (294 aa).

Asp-72 (proton acceptor) is an active-site residue. Residues 72 to 73 (DG), 146 to 147 (ND), Arg-157, Arg-174, Asp-176, 187 to 192 (TAYALS), and Gln-247 contribute to the NAD(+) site.

This sequence belongs to the NAD kinase family. A divalent metal cation is required as a cofactor.

The protein resides in the cytoplasm. It carries out the reaction NAD(+) + ATP = ADP + NADP(+) + H(+). Its function is as follows. Involved in the regulation of the intracellular balance of NAD and NADP, and is a key enzyme in the biosynthesis of NADP. Catalyzes specifically the phosphorylation on 2'-hydroxyl of the adenosine moiety of NAD to yield NADP. This Saccharophagus degradans (strain 2-40 / ATCC 43961 / DSM 17024) protein is NAD kinase.